We begin with the raw amino-acid sequence, 489 residues long: Bifunctional protein HldE (489 aa).

The tract at residues 1–328 (METENIHSFD…ELKAQLQDQP (328 aa)) is ribokinase. Position 206–209 (206–209 (NKKE)) interacts with ATP. Asp276 is an active-site residue. The tract at residues 357 to 489 (LTNGCFDLLH…IIQDIRNGRG (133 aa)) is cytidylyltransferase.

The protein in the N-terminal section; belongs to the carbohydrate kinase PfkB family. In the C-terminal section; belongs to the cytidylyltransferase family. Homodimer.

It carries out the reaction D-glycero-beta-D-manno-heptose 7-phosphate + ATP = D-glycero-beta-D-manno-heptose 1,7-bisphosphate + ADP + H(+). The enzyme catalyses D-glycero-beta-D-manno-heptose 1-phosphate + ATP + H(+) = ADP-D-glycero-beta-D-manno-heptose + diphosphate. It functions in the pathway nucleotide-sugar biosynthesis; ADP-L-glycero-beta-D-manno-heptose biosynthesis; ADP-L-glycero-beta-D-manno-heptose from D-glycero-beta-D-manno-heptose 7-phosphate: step 1/4. Its pathway is nucleotide-sugar biosynthesis; ADP-L-glycero-beta-D-manno-heptose biosynthesis; ADP-L-glycero-beta-D-manno-heptose from D-glycero-beta-D-manno-heptose 7-phosphate: step 3/4. Functionally, catalyzes the phosphorylation of D-glycero-D-manno-heptose 7-phosphate at the C-1 position to selectively form D-glycero-beta-D-manno-heptose-1,7-bisphosphate. Catalyzes the ADP transfer from ATP to D-glycero-beta-D-manno-heptose 1-phosphate, yielding ADP-D-glycero-beta-D-manno-heptose. In Desulfatibacillum aliphaticivorans, this protein is Bifunctional protein HldE.